The following is a 233-amino-acid chain: Endo-1,4-beta-xylanase 1 (233 aa).

The first 20 residues, 1 to 20 (MVSFTSIVTAVVALAGSALA), serve as a signal peptide directing secretion. Residue asparagine 27 is glycosylated (N-linked (GlcNAc...) asparagine). Residues 40 to 230 (QSTPSSTGRH…SAGNSNINVQ (191 aa)) form the GH11 domain. Glutamate 126 serves as the catalytic Nucleophile. The Proton donor role is filled by glutamate 217.

This sequence belongs to the glycosyl hydrolase 11 (cellulase G) family.

The protein resides in the secreted. It carries out the reaction Endohydrolysis of (1-&gt;4)-beta-D-xylosidic linkages in xylans.. It participates in glycan degradation; xylan degradation. Its function is as follows. Endo-1,4-beta-xylanase involved in the hydrolysis of xylan, a major structural heterogeneous polysaccharide found in plant biomass representing the second most abundant polysaccharide in the biosphere, after cellulose. Accounts for approximately 70 percent of the endoxylanase activity in the culture filtrate. The protein is Endo-1,4-beta-xylanase 1 (XYL1) of Pyricularia grisea (Crabgrass-specific blast fungus).